We begin with the raw amino-acid sequence, 158 residues long: Eukaryotic translation initiation factor 5A (158 aa).

Position 51 is a hypusine (Lys51).

The protein belongs to the eIF-5A family. Lys-51 undergoes hypusination, a unique post-translational modification that consists in the addition of a butylamino group from spermidine to lysine side chain, leading to the formation of the unusual amino acid hypusine. eIF-5As are the only known proteins to undergo this modification, which is essential for their function.

The protein resides in the cytoplasm. Translation factor that promotes translation elongation and termination, particularly upon ribosome stalling at specific amino acid sequence contexts. Binds between the exit (E) and peptidyl (P) site of the ribosome and promotes rescue of stalled ribosome: specifically required for efficient translation of polyproline-containing peptides as well as other motifs that stall the ribosome. Acts as a ribosome quality control (RQC) cofactor by joining the RQC complex to facilitate peptidyl transfer during CAT tailing step. This chain is Eukaryotic translation initiation factor 5A (ANB1), found in Candida albicans (strain SC5314 / ATCC MYA-2876) (Yeast).